The primary structure comprises 383 residues: Retrovirus-related Pol polyprotein from type-1 retrotransposable element R1 3 (383 aa).

The Reverse transcriptase domain occupies 1–88 (VDAFADDLLL…DRVRYLGVNV (88 aa)). The interval 229–383 (LSLHECRELV…VQRMRENEES (155 aa)) is nucleic acid-binding endonuclease.

It carries out the reaction DNA(n) + a 2'-deoxyribonucleoside 5'-triphosphate = DNA(n+1) + diphosphate. The sequence is that of Retrovirus-related Pol polyprotein from type-1 retrotransposable element R1 3 from Nasonia vitripennis (Parasitic wasp).